A 691-amino-acid polypeptide reads, in one-letter code: Elongation factor G (691 aa).

One can recognise a tr-type G domain in the interval 8–282 (DRVRNIGIAA…AVVDYLPAPI (275 aa)). GTP-binding positions include 17 to 24 (AHIDAGKT), 81 to 85 (DTPGH), and 135 to 138 (NKMD).

Belongs to the TRAFAC class translation factor GTPase superfamily. Classic translation factor GTPase family. EF-G/EF-2 subfamily.

The protein resides in the cytoplasm. Its function is as follows. Catalyzes the GTP-dependent ribosomal translocation step during translation elongation. During this step, the ribosome changes from the pre-translocational (PRE) to the post-translocational (POST) state as the newly formed A-site-bound peptidyl-tRNA and P-site-bound deacylated tRNA move to the P and E sites, respectively. Catalyzes the coordinated movement of the two tRNA molecules, the mRNA and conformational changes in the ribosome. The polypeptide is Elongation factor G (Synechococcus sp. (strain RCC307)).